A 232-amino-acid polypeptide reads, in one-letter code: Large ribosomal subunit protein uL1 (232 aa).

Belongs to the universal ribosomal protein uL1 family. As to quaternary structure, part of the 50S ribosomal subunit.

In terms of biological role, binds directly to 23S rRNA. The L1 stalk is quite mobile in the ribosome, and is involved in E site tRNA release. Its function is as follows. Protein L1 is also a translational repressor protein, it controls the translation of the L11 operon by binding to its mRNA. The chain is Large ribosomal subunit protein uL1 from Bartonella bacilliformis (strain ATCC 35685 / KC583 / Herrer 020/F12,63).